The chain runs to 204 residues: Urease accessory protein UreG (204 aa).

13–20 is a GTP binding site; the sequence is GPVGSGKT.

This sequence belongs to the SIMIBI class G3E GTPase family. UreG subfamily. Homodimer. UreD, UreF and UreG form a complex that acts as a GTP-hydrolysis-dependent molecular chaperone, activating the urease apoprotein by helping to assemble the nickel containing metallocenter of UreC. The UreE protein probably delivers the nickel.

The protein resides in the cytoplasm. Facilitates the functional incorporation of the urease nickel metallocenter. This process requires GTP hydrolysis, probably effectuated by UreG. This is Urease accessory protein UreG from Acinetobacter baumannii (strain AB307-0294).